Consider the following 223-residue polypeptide: Ubiquitin carboxyl-terminal hydrolase isozyme L1 (223 aa).

Met-1 bears the N-acetylmethionine mark. Residues 2–221 enclose the UCH catalytic domain; that stretch reads QLKPMEINPE…VRFSAVALCK (220 aa). The segment at 5–10 is interaction with ubiquitin; it reads PMEINP. Cys-90 (nucleophile) is an active-site residue. Ser-125 is subject to Phosphoserine. The Proton donor role is filled by His-161. The interval 211-216 is interaction with ubiquitin; sequence EVRFSA. Cys-220 carries S-farnesyl cysteine lipidation. A propeptide spans 221–223 (removed in mature form); sequence KAA.

It belongs to the peptidase C12 family. Monomer. Homodimer. Interacts with COPS5 and SNCA. Post-translationally, O-glycosylated. In terms of tissue distribution, expressed in the placenta at all stages of pregnancy. Expression increases as pregnancy progresses.

It is found in the cytoplasm. The protein resides in the endoplasmic reticulum membrane. It localises to the nucleus. It catalyses the reaction Thiol-dependent hydrolysis of ester, thioester, amide, peptide and isopeptide bonds formed by the C-terminal Gly of ubiquitin (a 76-residue protein attached to proteins as an intracellular targeting signal).. In terms of biological role, ubiquitin-protein hydrolase involved both in the processing of ubiquitin precursors and of ubiquitinated proteins. This enzyme is a thiol protease that recognizes and hydrolyzes a peptide bond at the C-terminal glycine of ubiquitin. Also binds to free monoubiquitin and may prevent its degradation in lysosomes. The homodimer may have ATP-independent ubiquitin ligase activity. This is Ubiquitin carboxyl-terminal hydrolase isozyme L1 (UCHL1) from Macaca fascicularis (Crab-eating macaque).